Consider the following 523-residue polypeptide: Cytochrome P450 CYP82J17 (523 aa).

Residues 4–24 traverse the membrane as a helical segment; the sequence is FLSQPITIVLAILSVLLYNIW. Residue Cys462 participates in heme binding.

It belongs to the cytochrome P450 family. As to expression, mainly expressed in leaves and seed pods and, to a lower extent, in flowers and stems.

The protein localises to the membrane. It functions in the pathway steroid metabolism; cholesterol metabolism. In terms of biological role, involved in the biosynthesis of spiroketal steroid and saponin natural products from cholesterol such as diosgenin and analogs (e.g. furostanol and spirostanol), plant defense compounds used as main precursors for the industrial production of steroid hormones. During the 5,6-spiroketalization of cholesterol, may catalyze the 27-monohydroxylation of furostanol-type steroid to an intermediate product that undergoes a stereospecific formation of the terminal heterocycle to yield diosgenin. This Trigonella foenum-graecum (Fenugreek) protein is Cytochrome P450 CYP82J17.